The sequence spans 459 residues: ATP synthase subunit beta (459 aa).

148–155 contributes to the ATP binding site; the sequence is GGAGVGKT.

Belongs to the ATPase alpha/beta chains family. In terms of assembly, F-type ATPases have 2 components, CF(1) - the catalytic core - and CF(0) - the membrane proton channel. CF(1) has five subunits: alpha(3), beta(3), gamma(1), delta(1), epsilon(1). CF(0) has three main subunits: a(1), b(2) and c(9-12). The alpha and beta chains form an alternating ring which encloses part of the gamma chain. CF(1) is attached to CF(0) by a central stalk formed by the gamma and epsilon chains, while a peripheral stalk is formed by the delta and b chains.

It localises to the cell inner membrane. It catalyses the reaction ATP + H2O + 4 H(+)(in) = ADP + phosphate + 5 H(+)(out). In terms of biological role, produces ATP from ADP in the presence of a proton gradient across the membrane. The catalytic sites are hosted primarily by the beta subunits. This chain is ATP synthase subunit beta, found in Vesicomyosocius okutanii subsp. Calyptogena okutanii (strain HA).